The primary structure comprises 128 residues: Large ribosomal subunit protein bL12 (128 aa).

Belongs to the bacterial ribosomal protein bL12 family. Homodimer. Part of the ribosomal stalk of the 50S ribosomal subunit. Forms a multimeric L10(L12)X complex, where L10 forms an elongated spine to which 2 to 4 L12 dimers bind in a sequential fashion. Binds GTP-bound translation factors.

Forms part of the ribosomal stalk which helps the ribosome interact with GTP-bound translation factors. Is thus essential for accurate translation. This chain is Large ribosomal subunit protein bL12, found in Synechococcus sp. (strain CC9311).